Consider the following 142-residue polypeptide: Hydrogenase maturation factor HypA (142 aa).

A Ni(2+)-binding site is contributed by H2. Zn(2+)-binding residues include C73, C76, C109, and C112.

This sequence belongs to the HypA/HybF family.

Functionally, involved in the maturation of [NiFe] hydrogenases. Required for nickel insertion into the metal center of the hydrogenase. The chain is Hydrogenase maturation factor HypA from Methanopyrus kandleri (strain AV19 / DSM 6324 / JCM 9639 / NBRC 100938).